Here is a 402-residue protein sequence, read N- to C-terminus: MNHPQPITMPIPGHIDPVPVPRDLKPRVDGRIDLLGLSRDDLRMALETAQLEPRQAKLRAKQLWHWIYNRGATDFAVMTDIAKDMRGWLDQRFVVSRPEVVEAQVSTDGTRKWLLRSDDGQDYEMVFIPDADRGTLCVSSQVGCTLNCRFCHTGTMKLVRNLTPAEIVGQVMLARDALGEWPSQPEGRMLTNIVMMGMGEPLYNFDNVRDALKLVMDGDGLALSKRRITLSTAGVVPMMARAGEEIGVNLAVSLHAITKEVRDEIVPLNRKYGIEDLLQACADYPGANNARRITFEYVMLKDKNDRDEDALELVRLIRKYRLPAKVNLIPFNPWPGAPYECSDPDRVARFSDLIFKAGISAPVRTPRGRDIMAACGQLKSAAEKKSRAELDRMAAEKQAALG.

Glutamate 124 functions as the Proton acceptor in the catalytic mechanism. A Radical SAM core domain is found at 130-370 (DADRGTLCVS…APVRTPRGRD (241 aa)). A disulfide bridge connects residues cysteine 137 and cysteine 375. Positions 144, 148, and 151 each coordinate [4Fe-4S] cluster. S-adenosyl-L-methionine contacts are provided by residues 199–200 (GE), serine 231, 253–255 (SLH), and asparagine 332. The active-site S-methylcysteine intermediate is the cysteine 375.

This sequence belongs to the radical SAM superfamily. RlmN family. [4Fe-4S] cluster serves as cofactor.

The protein resides in the cytoplasm. It carries out the reaction adenosine(2503) in 23S rRNA + 2 reduced [2Fe-2S]-[ferredoxin] + 2 S-adenosyl-L-methionine = 2-methyladenosine(2503) in 23S rRNA + 5'-deoxyadenosine + L-methionine + 2 oxidized [2Fe-2S]-[ferredoxin] + S-adenosyl-L-homocysteine. The enzyme catalyses adenosine(37) in tRNA + 2 reduced [2Fe-2S]-[ferredoxin] + 2 S-adenosyl-L-methionine = 2-methyladenosine(37) in tRNA + 5'-deoxyadenosine + L-methionine + 2 oxidized [2Fe-2S]-[ferredoxin] + S-adenosyl-L-homocysteine. In terms of biological role, specifically methylates position 2 of adenine 2503 in 23S rRNA and position 2 of adenine 37 in tRNAs. m2A2503 modification seems to play a crucial role in the proofreading step occurring at the peptidyl transferase center and thus would serve to optimize ribosomal fidelity. In Rhizorhabdus wittichii (strain DSM 6014 / CCUG 31198 / JCM 15750 / NBRC 105917 / EY 4224 / RW1) (Sphingomonas wittichii), this protein is Dual-specificity RNA methyltransferase RlmN.